The following is a 212-amino-acid chain: Cytidylate kinase (212 aa).

9-17 contributes to the ATP binding site; that stretch reads GPAAAGKGT.

The protein belongs to the cytidylate kinase family. Type 1 subfamily.

Its subcellular location is the cytoplasm. It catalyses the reaction CMP + ATP = CDP + ADP. It carries out the reaction dCMP + ATP = dCDP + ADP. In Rhizobium meliloti (strain 1021) (Ensifer meliloti), this protein is Cytidylate kinase.